The primary structure comprises 481 residues: Adenosylhomocysteinase (481 aa).

The substrate site is built by T65, D140, and E200. 201-203 (TTT) contacts NAD(+). Substrate is bound by residues K230 and D234. NAD(+) is bound by residues N235, 264-269 (GYGDVG), E287, N322, 343-345 (IGH), and N393.

This sequence belongs to the adenosylhomocysteinase family. Requires NAD(+) as cofactor.

It localises to the cytoplasm. It carries out the reaction S-adenosyl-L-homocysteine + H2O = L-homocysteine + adenosine. It participates in amino-acid biosynthesis; L-homocysteine biosynthesis; L-homocysteine from S-adenosyl-L-homocysteine: step 1/1. May play a key role in the regulation of the intracellular concentration of adenosylhomocysteine. The sequence is that of Adenosylhomocysteinase from Polynucleobacter necessarius subsp. necessarius (strain STIR1).